Here is a 245-residue protein sequence, read N- to C-terminus: tRNA (guanine-N(1)-)-methyltransferase (245 aa).

S-adenosyl-L-methionine-binding positions include Gly-111 and 131 to 136 (MGDYVL).

This sequence belongs to the RNA methyltransferase TrmD family. In terms of assembly, homodimer.

It is found in the cytoplasm. It carries out the reaction guanosine(37) in tRNA + S-adenosyl-L-methionine = N(1)-methylguanosine(37) in tRNA + S-adenosyl-L-homocysteine + H(+). Its function is as follows. Specifically methylates guanosine-37 in various tRNAs. The polypeptide is tRNA (guanine-N(1)-)-methyltransferase (Staphylococcus aureus (strain USA300)).